A 434-amino-acid polypeptide reads, in one-letter code: Serine/threonine transporter SstT (434 aa).

The next 9 membrane-spanning stretches (helical) occupy residues 14–34 (IVIGIIVGAVLGVMVPSWSFI), 41–61 (FVGALKAIAPLLVFLLIMSAI), 72–92 (FGTVIVLYLSATLFSSIAAVA), 135–155 (ALVEGNYLAILFWSLLIGSGL), 172–192 (TVSAVAQNVIQFAPFGIVGLL), 210–230 (LLMLLVATMVFVYLVVYPFMV), 282–302 (ISIPLGGSANSGGAAITVSIM), 316–336 (IFLALLLCFLSAISATGVSGI), and 351–371 (FGISNDIAMQVVGIGFIIGVV). The interval 413–434 (GKGTAEVVTPEKTNEAEESEQV) is disordered.

Belongs to the dicarboxylate/amino acid:cation symporter (DAACS) (TC 2.A.23) family.

It localises to the cell membrane. It catalyses the reaction L-serine(in) + Na(+)(in) = L-serine(out) + Na(+)(out). It carries out the reaction L-threonine(in) + Na(+)(in) = L-threonine(out) + Na(+)(out). Its function is as follows. Involved in the import of serine and threonine into the cell, with the concomitant import of sodium (symport system). The sequence is that of Serine/threonine transporter SstT from Lacticaseibacillus casei (strain BL23) (Lactobacillus casei).